The following is a 984-amino-acid chain: Putative formate dehydrogenase SH0748 (984 aa).

Residues 3–79 enclose the 2Fe-2S ferredoxin-type domain; it reads EHLIVTLDGT…PMTVNTQNND (77 aa). 4 residues coordinate [2Fe-2S] cluster: C37, C48, C51, and C63. A 4Fe-4S His(Cys)3-ligated-type domain is found at 79–119; that stretch reads DVKASQKEALDRILEKHMLYCTVCDYNNGDCEIHNAMDAWG. 16 residues coordinate [4Fe-4S] cluster: H95, C99, C102, C109, C147, C150, C153, C157, C190, C193, C196, C200, C264, C267, C271, and C299. 2 consecutive 4Fe-4S ferredoxin-type domains span residues 138–165 and 181–211; these read PFYR…VNET and NDVP…VNME. Positions 252–984 are formate dehydrogenase; sequence MRKERIKKTK…YVFPGNVVDK (733 aa). A 4Fe-4S Mo/W bis-MGD-type domain is found at 257 to 313; the sequence is IKKTKTVCTYCGVGCSFDVWTKDREVLKVQPSHDSPANKIATCVKGKFSWGHINSDQ.

In the C-terminal section; belongs to the prokaryotic molybdopterin-containing oxidoreductase family. The cofactor is [2Fe-2S] cluster. [4Fe-4S] cluster is required as a cofactor. Mo-bis(molybdopterin guanine dinucleotide) serves as cofactor.

The enzyme catalyses formate + NAD(+) = CO2 + NADH. In Staphylococcus haemolyticus (strain JCSC1435), this protein is Putative formate dehydrogenase SH0748.